Consider the following 421-residue polypeptide: Gamma-glutamyl phosphate reductase (421 aa).

Belongs to the gamma-glutamyl phosphate reductase family.

It localises to the cytoplasm. It catalyses the reaction L-glutamate 5-semialdehyde + phosphate + NADP(+) = L-glutamyl 5-phosphate + NADPH + H(+). Its pathway is amino-acid biosynthesis; L-proline biosynthesis; L-glutamate 5-semialdehyde from L-glutamate: step 2/2. Its function is as follows. Catalyzes the NADPH-dependent reduction of L-glutamate 5-phosphate into L-glutamate 5-semialdehyde and phosphate. The product spontaneously undergoes cyclization to form 1-pyrroline-5-carboxylate. The chain is Gamma-glutamyl phosphate reductase from Pseudomonas fluorescens (strain ATCC BAA-477 / NRRL B-23932 / Pf-5).